The following is a 613-amino-acid chain: MLFSFLQETAYAVYGLWASFYPSLYQRPLSSSTRHLDHGPDNRGYWKDGFSIKTDYEVEIPEGKLVEYFFTISEAEIAPDGYLTNVTLVNDQFPGPKIEADWGDTIRVTVYNNLTNSNGTSFHWHGIRQFQTNYLDGVPGVTQCPSKPGDTQVYEFRAMQYGTGWYHSHYSLQYTNGARGPVVIHGPSSANYDIDVEPLLITDWYHADAFSYFHEEITDHAHIPTGTLLNGKGVYECDPTKDSRCVSPPGERHTIQFEPGKKHKLRIISSASLATYKFWIDGHNFTVISTDFVPIEPYVTDILIVGVAQRYEVIVEANATFEHGSNFWIHGTHCDDMIPVPWDTRIGIIQYDAEDNSDPYTPPLETTHPGYGCRDPPPTSLVPIVPRQVGNNVNGFSPADYLEIGLQSWPNISDPDSTIRKWVLANRTQYVDWREPSLRKLVHDNGKTNFTQDEAPIVLDYETGEWVYFVIEGNFTMRDPINDPRPIPRSVHPIHLHGHDFAILAQGDGYFSKDVVPNLDNPARRDTVNLPIGGYVWIAFQINNPGTWLMHCHIAWHASAGLSLQFIEQPSKIKPLVEASGILPEMESRCKDWTEHYNKVNIPLGLVQEDSGI.

3 consecutive Plastocyanin-like domains span residues 72 to 188, 198 to 331, and 431 to 571; these read ISEA…HGPS, PLLI…WIHG, and VDWR…EQPS.

It belongs to the multicopper oxidase family.

Its pathway is secondary metabolite biosynthesis. Functionally, oxidoreductase; part of the gene cluster that mediates the biosynthesis of dibenzodioxocinones such as pestalotiollide B, a novel class of inhibitors against cholesterol ester transfer protein (CEPT). The biosynthesis initiates from condensation of acetate and malonate units catalyzed by the non-reducing PKS pks8/GME11356. Pks8/GME11356 lacks a thioesterase (TE) domain, which is important to the cyclizing of the third ring of atrochrysone carboxylic acid, and the esterase GME11355 might play the role of TE and catalyzes the cyclization reaction of the C ring. The lactamase-like protein GME11357 (or other beta-lactamases in Pestalotiopsis microspora) probably hydrolyzes the thioester bond between the ACP of pks8/GME11356 and the intermediate to release atrochrysone carboxylic acid, which is spontaneously dehydrates to form endocrocin anthrone. Endocrocin anthrone is further converted to emodin via the endocrocin intermediate. Emodin is then oxidized by several enzymes such as the Baeyer-Villiger oxidase GME11358, the oxidoreductase GME11367, the short chain dehydrogenase/reductase GME11373, as well as by other oxidoreductases from the cluster, to modify the A and C rings and open the B ring, and finally yield monodictyphenone. The prenyltransferase GME11375 may catalyze the addition reaction between the C5 side chains and the carbon bone of dibenzodioxocinones. The remaining biochemical reactions to the final product dibenzodioxocinones should be methylation catalyzed by methyltransferase GME11366 and reduction and lactonization reaction catalyzed by a series of oxidordeuctases. This chain is Oxidoreductase GME11365, found in Pestalotiopsis microspora.